We begin with the raw amino-acid sequence, 364 residues long: Aminomethyltransferase (364 aa).

This sequence belongs to the GcvT family. In terms of assembly, the glycine cleavage system is composed of four proteins: P, T, L and H.

It carries out the reaction N(6)-[(R)-S(8)-aminomethyldihydrolipoyl]-L-lysyl-[protein] + (6S)-5,6,7,8-tetrahydrofolate = N(6)-[(R)-dihydrolipoyl]-L-lysyl-[protein] + (6R)-5,10-methylene-5,6,7,8-tetrahydrofolate + NH4(+). In terms of biological role, the glycine cleavage system catalyzes the degradation of glycine. The protein is Aminomethyltransferase of Geobacillus kaustophilus (strain HTA426).